The chain runs to 91 residues: Kazal-type trypsin inhibitor (91 aa).

Residues M1–A22 form the signal peptide. The Kazal-like domain occupies D25–N78. Cystine bridges form between C31–C56, C33–C52, and C41–C76. A glycan (N-linked (GlcNAc...) asparagine) is linked at N78.

As to quaternary structure, interacts with human PLG (plasmin). As to expression, female salivary gland. Female gut at 3 and 24 hours after blood feeding. Female carcass. Male tissues. Not detected in ovary and fat body at 3 and 24 hours after blood feeding.

Its subcellular location is the secreted. Anticoagulant protein that decreases host thrombin (F2) activity via an uncompetitive inhibition mechanism. Inhibits amidolytic activity of host plasmin (PLG). Inhibits amidolytic activity of host trypsin. Inhibits trypsin-like endogenous activity from gut of female mosquitoes 24 hours after feeding and weakly affects enzyme activity from gut 3 hours after feeding, suggesting a possible role as an inhibitor of endogenous proteases. In terms of biological role, (Microbial infection) Limits host plasmin-mediated enhancement of dengue virus type 2 infection in mosquito midgut. In Aedes aegypti (Yellowfever mosquito), this protein is Kazal-type trypsin inhibitor.